A 542-amino-acid chain; its full sequence is CTP synthase (542 aa).

The amidoligase domain stretch occupies residues 1–265 (MTRYIFVTGG…DQLVIERFGL (265 aa)). Residue serine 13 participates in CTP binding. Serine 13 contacts UTP. ATP contacts are provided by residues 14–19 (SLGKGI) and aspartate 71. Aspartate 71 and glutamate 139 together coordinate Mg(2+). CTP contacts are provided by residues 146–148 (DIE), 186–191 (KTKPTQ), and lysine 222. UTP contacts are provided by residues 186 to 191 (KTKPTQ) and lysine 222. The Glutamine amidotransferase type-1 domain occupies 290-541 (TIAMVGKYME…VEAALANKKG (252 aa)). Position 351 (glycine 351) interacts with L-glutamine. Catalysis depends on cysteine 378, which acts as the Nucleophile; for glutamine hydrolysis. Residues 379–382 (LGMQ), glutamate 402, and arginine 469 each bind L-glutamine. Active-site residues include histidine 514 and glutamate 516.

The protein belongs to the CTP synthase family. As to quaternary structure, homotetramer.

It carries out the reaction UTP + L-glutamine + ATP + H2O = CTP + L-glutamate + ADP + phosphate + 2 H(+). It catalyses the reaction L-glutamine + H2O = L-glutamate + NH4(+). The enzyme catalyses UTP + NH4(+) + ATP = CTP + ADP + phosphate + 2 H(+). Its pathway is pyrimidine metabolism; CTP biosynthesis via de novo pathway; CTP from UDP: step 2/2. Allosterically activated by GTP, when glutamine is the substrate; GTP has no effect on the reaction when ammonia is the substrate. The allosteric effector GTP functions by stabilizing the protein conformation that binds the tetrahedral intermediate(s) formed during glutamine hydrolysis. Inhibited by the product CTP, via allosteric rather than competitive inhibition. Catalyzes the ATP-dependent amination of UTP to CTP with either L-glutamine or ammonia as the source of nitrogen. Regulates intracellular CTP levels through interactions with the four ribonucleotide triphosphates. This is CTP synthase from Marinobacter nauticus (strain ATCC 700491 / DSM 11845 / VT8) (Marinobacter aquaeolei).